A 485-amino-acid chain; its full sequence is E3 ubiquitin-protein ligase TRIM68 (485 aa).

The RING-type zinc-finger motif lies at 16 to 61 (CPICMTFLREPVSISCGHTFCHSCLSGLWKLPGESQNLSYTCPLCR). Residues 93–134 (LKTDVCDLHKEQLTMFCKEDDMVTCEACKQSPEHEAHSVVPI) form a B box-type zinc finger. 4 residues coordinate Zn(2+): cysteine 98, histidine 101, cysteine 120, and histidine 126. A coiled-coil region spans residues 144–226 (KLQQALEHLR…EQEKGETASK (83 aa)). Residues 285–483 (LKTDCRVLGL…TPLTICTLGG (199 aa)) enclose the B30.2/SPRY domain.

Belongs to the TRIM/RBCC family. In terms of assembly, interacts with AR/androgen receptor (via ligand-binding domain). Interacts with KAT5/TIP60. Post-translationally, auto-ubiquitinated.

Its subcellular location is the cytoplasm. It is found in the perinuclear region. The protein localises to the nucleus. The catalysed reaction is S-ubiquitinyl-[E2 ubiquitin-conjugating enzyme]-L-cysteine + [acceptor protein]-L-lysine = [E2 ubiquitin-conjugating enzyme]-L-cysteine + N(6)-ubiquitinyl-[acceptor protein]-L-lysine.. Its pathway is protein modification; protein ubiquitination. In terms of biological role, functions as a ubiquitin E3 ligase. Acts as a coactivator of androgen receptor (AR) depending on its ubiquitin ligase activity. The polypeptide is E3 ubiquitin-protein ligase TRIM68 (Trim68) (Mus musculus (Mouse)).